A 250-amino-acid polypeptide reads, in one-letter code: Small ribosomal subunit protein uS2 (250 aa).

It belongs to the universal ribosomal protein uS2 family.

The protein is Small ribosomal subunit protein uS2 of Paracidovorax citrulli (strain AAC00-1) (Acidovorax citrulli).